Consider the following 212-residue polypeptide: Acyl-homoserine-lactone synthase (212 aa).

Belongs to the autoinducer synthase family.

It catalyses the reaction a fatty acyl-[ACP] + S-adenosyl-L-methionine = an N-acyl-L-homoserine lactone + S-methyl-5'-thioadenosine + holo-[ACP] + H(+). In terms of biological role, required for the synthesis of OHHL (N-(3-oxohexanoyl)-L-homoserine lactone), an autoinducer molecule which binds to ExpR and thus acts in virulence (soft rot disease) through the activation of genes for plant tissue macerating enzymes. This is Acyl-homoserine-lactone synthase (expI) from Dickeya dadantii (strain 3937) (Erwinia chrysanthemi (strain 3937)).